A 184-amino-acid chain; its full sequence is NADH-quinone oxidoreductase subunit B (184 aa).

[4Fe-4S] cluster contacts are provided by C37, C38, C103, and C132.

This sequence belongs to the complex I 20 kDa subunit family. In terms of assembly, NDH-1 is composed of 14 different subunits. Subunits NuoB, C, D, E, F, and G constitute the peripheral sector of the complex. It depends on [4Fe-4S] cluster as a cofactor.

It is found in the cell membrane. It catalyses the reaction a quinone + NADH + 5 H(+)(in) = a quinol + NAD(+) + 4 H(+)(out). Its function is as follows. NDH-1 shuttles electrons from NADH, via FMN and iron-sulfur (Fe-S) centers, to quinones in the respiratory chain. The immediate electron acceptor for the enzyme in this species is believed to be a menaquinone. Couples the redox reaction to proton translocation (for every two electrons transferred, four hydrogen ions are translocated across the cytoplasmic membrane), and thus conserves the redox energy in a proton gradient. This Mycolicibacterium vanbaalenii (strain DSM 7251 / JCM 13017 / BCRC 16820 / KCTC 9966 / NRRL B-24157 / PYR-1) (Mycobacterium vanbaalenii) protein is NADH-quinone oxidoreductase subunit B.